The chain runs to 152 residues: Biotin carboxyl carrier protein of acetyl-CoA carboxylase (152 aa).

A Biotinyl-binding domain is found at 72-148; it reads IIDILSPISG…TKNQVLMKII (77 aa). Lysine 114 bears the N6-biotinyllysine mark.

Its subcellular location is the plastid. The protein resides in the chloroplast. Its pathway is lipid metabolism; fatty acid biosynthesis. Functionally, this protein is a component of the acetyl coenzyme A carboxylase complex; first, biotin carboxylase catalyzes the carboxylation of the carrier protein and then the transcarboxylase transfers the carboxyl group to form malonyl-CoA. The polypeptide is Biotin carboxyl carrier protein of acetyl-CoA carboxylase (accB) (Cyanidium caldarium (Red alga)).